Consider the following 273-residue polypeptide: Proteasome subunit beta type-7-A (273 aa).

The propeptide at 1 to 37 (MSQSTVDVPPKGGFSFDLCKRNDMLTQKGLKAPSFLK) is removed in mature form. Threonine 40 acts as the Nucleophile in catalysis.

Belongs to the peptidase T1B family. As to quaternary structure, component of the 20S core complex of the 26S proteasome. The 26S proteasome is composed of a core protease (CP), known as the 20S proteasome, capped at one or both ends by the 19S regulatory particle (RP/PA700). The 20S proteasome core is composed of 28 subunits that are arranged in four stacked rings, resulting in a barrel-shaped structure. The two end rings are each formed by seven alpha subunits, and the two central rings are each formed by seven beta subunits. The catalytic chamber with the active sites is on the inside of the barrel.

It localises to the cytoplasm. Its subcellular location is the nucleus. The enzyme catalyses Cleavage of peptide bonds with very broad specificity.. In terms of biological role, the proteasome is a multicatalytic proteinase complex which is characterized by its ability to cleave peptides with Arg, Phe, Tyr, Leu, and Glu adjacent to the leaving group at neutral or slightly basic pH. The proteasome has an ATP-dependent proteolytic activity. This Arabidopsis thaliana (Mouse-ear cress) protein is Proteasome subunit beta type-7-A (PBB1).